Consider the following 343-residue polypeptide: MVKVAILGASGGVGQPLSLLLKLSPYVSELALYDIRAAEGIGKDLSHINTNSSCVGYDKDSIENTLSNAQVVLIPAGVPRKPGLTRDDLFKMNAGIVKSLVTAVGKFAPNARILVISNPVNSLVPIAVETLKKMGKFKPGNVMGVTNLDLVRAETFLVDYLMLKNPKIGQEQDKTTMHRKVTVIGGHSGETIIPIITDKSLVFQLDKQYEHFIHRVQFGGDEIVKAKQGAGSATLSMAFAGAKFAEEVLRSFHNEKPETESLSAFVYLPGLKNGKKAQQLVGDNSIEYFSLPIVLRNGSVVSIDTSVLEKLSPREEQLVNTAVKELRKNIEKGKSFILDSSKL.

Residues 8 to 14 (GASGGVG) and Asp34 contribute to the NAD(+) site. Residues Arg80 and Arg86 each coordinate substrate. Residues Asn93 and 116-118 (ISN) each bind NAD(+). Substrate-binding residues include Asn118 and Arg152. The Proton acceptor role is filled by His187. Residue Met237 coordinates NAD(+).

Belongs to the LDH/MDH superfamily. MDH type 1 family. In terms of assembly, homodimer.

The protein resides in the peroxisome. It carries out the reaction (S)-malate + NAD(+) = oxaloacetate + NADH + H(+). In Saccharomyces cerevisiae (strain ATCC 204508 / S288c) (Baker's yeast), this protein is Malate dehydrogenase, peroxisomal (MDH3).